The following is a 430-amino-acid chain: Sorting nexin-30 (430 aa).

Residues 1–18 (MSNGGTPRSLPSSGQKSI) are compositionally biased toward polar residues. A disordered region spans residues 1-66 (MSNGGTPRSL…SSPASSSSLL (66 aa)). Residues 57–66 (SSPASSSSLL) show a composition bias toward low complexity. In terms of domain architecture, PX spans 80–201 (RDLFVTVDDP…AFLSAKDLNK (122 aa)). Residues Arg-123, Gln-125, Lys-153, and Arg-167 each coordinate a 1,2-diacyl-sn-glycero-3-phospho-(1D-myo-inositol-3-phosphate). The BAR domain occupies 223 to 428 (KLRGRPVEFA…LQDKQDAKGE (206 aa)).

It belongs to the sorting nexin family.

It is found in the early endosome membrane. Involved in the regulation of endocytosis and in several stages of intracellular trafficking. Together with snx4, involved in autophagosome assembly. In Danio rerio (Zebrafish), this protein is Sorting nexin-30 (snx30).